Here is a 189-residue protein sequence, read N- to C-terminus: Glycerol-3-phosphate acyltransferase (189 aa).

5 helical membrane passes run 1–21, 50–70, 77–97, 111–131, and 151–171; these read MFWLLALLAYLLGSLSFAIVL, KLAILTLLGDLCKGLLPVLLA, LHAQAWVGVCAVLGHLFPLYF, MLMGLYFPAALLAIGAWLLTF, and LLAWREPEALLPITVLTAMIV.

The protein belongs to the PlsY family. In terms of assembly, probably interacts with PlsX.

It is found in the cell inner membrane. It catalyses the reaction an acyl phosphate + sn-glycerol 3-phosphate = a 1-acyl-sn-glycero-3-phosphate + phosphate. It participates in lipid metabolism; phospholipid metabolism. In terms of biological role, catalyzes the transfer of an acyl group from acyl-phosphate (acyl-PO(4)) to glycerol-3-phosphate (G3P) to form lysophosphatidic acid (LPA). This enzyme utilizes acyl-phosphate as fatty acyl donor, but not acyl-CoA or acyl-ACP. This Pseudomonas putida (strain GB-1) protein is Glycerol-3-phosphate acyltransferase.